Consider the following 252-residue polypeptide: Triosephosphate isomerase (252 aa).

10–12 provides a ligand contact to substrate; that stretch reads NWK. The Electrophile role is filled by histidine 96. The active-site Proton acceptor is the glutamate 168. Substrate contacts are provided by residues glycine 174, serine 214, and 235-236; that span reads GG.

The protein belongs to the triosephosphate isomerase family. Homodimer.

It is found in the cytoplasm. It carries out the reaction D-glyceraldehyde 3-phosphate = dihydroxyacetone phosphate. Its pathway is carbohydrate biosynthesis; gluconeogenesis. It participates in carbohydrate degradation; glycolysis; D-glyceraldehyde 3-phosphate from glycerone phosphate: step 1/1. Its function is as follows. Involved in the gluconeogenesis. Catalyzes stereospecifically the conversion of dihydroxyacetone phosphate (DHAP) to D-glyceraldehyde-3-phosphate (G3P). In Lactococcus lactis subsp. cremoris (strain MG1363), this protein is Triosephosphate isomerase.